The sequence spans 152 residues: Ribosomal RNA large subunit methyltransferase H (152 aa).

S-adenosyl-L-methionine-binding positions include leucine 70, glycine 101, and 120–125 (LSDLTF).

It belongs to the RNA methyltransferase RlmH family. As to quaternary structure, homodimer.

The protein resides in the cytoplasm. It carries out the reaction pseudouridine(1915) in 23S rRNA + S-adenosyl-L-methionine = N(3)-methylpseudouridine(1915) in 23S rRNA + S-adenosyl-L-homocysteine + H(+). Its function is as follows. Specifically methylates the pseudouridine at position 1915 (m3Psi1915) in 23S rRNA. The chain is Ribosomal RNA large subunit methyltransferase H from Pseudothermotoga lettingae (strain ATCC BAA-301 / DSM 14385 / NBRC 107922 / TMO) (Thermotoga lettingae).